The chain runs to 331 residues: MSTKEKLISHVMKEEPVGSGNKVTVVGVGMVGMASAISILLKDLCDELAMVDVMEDKLKGEVMDLQHGSLFLKTKIVGDKDYSVTANSKVVVVTAGARQQEGESRLNLVQRNVNIFKFIIPNIVKYSPNCILMVVSNPVDILTYVAWKLSGFPRHRVLGSGTNLDSARFRHLIGEKLHLHPSSCHAWIVGEHGDSSVPVWSGVNVAGVSLQGLNPQMGTEGDGENWMAIHKEVVDGAYEVIKLKGYTSWAIGMSVADLVESIIKNMHKVHPVSTLVQGMHGVKDEVFLSVPCVLGNSGLTDVIHMALKAEEEKQVQKSAETLWGVQKELTL.

NAD(+)-binding positions include 29–57 (GMVG…MEDK) and Arg-98. 3 residues coordinate substrate: Arg-105, Asn-137, and Arg-168. Asn-137 lines the NAD(+) pocket. The Proton acceptor role is filled by His-192. Thr-247 contacts substrate.

It belongs to the LDH/MDH superfamily. LDH family. Homotetramer.

The protein localises to the cytoplasm. It carries out the reaction (S)-lactate + NAD(+) = pyruvate + NADH + H(+). The protein operates within fermentation; pyruvate fermentation to lactate; (S)-lactate from pyruvate: step 1/1. Functionally, interconverts simultaneously and stereospecifically pyruvate and lactate with concomitant interconversion of NADH and NAD(+). The protein is L-lactate dehydrogenase A chain (ldha) of Paranotothenia magellanica (Maori cod).